The chain runs to 553 residues: Arginine--tRNA ligase (553 aa).

The 'HIGH' region signature appears at 132–140 (PTGDLHIGH).

Belongs to the class-I aminoacyl-tRNA synthetase family. In terms of assembly, monomer.

The protein resides in the cytoplasm. The catalysed reaction is tRNA(Arg) + L-arginine + ATP = L-arginyl-tRNA(Arg) + AMP + diphosphate. The sequence is that of Arginine--tRNA ligase from Staphylococcus aureus (strain N315).